The primary structure comprises 264 residues: Type III pantothenate kinase (264 aa).

Position 6–13 (6–13 (DVGNTNIK)) interacts with ATP. A substrate-binding site is contributed by 108-111 (GSDR). Aspartate 110 serves as the catalytic Proton acceptor. Threonine 134 contacts ATP.

Belongs to the type III pantothenate kinase family. As to quaternary structure, homodimer. NH4(+) serves as cofactor. Requires K(+) as cofactor.

The protein localises to the cytoplasm. The enzyme catalyses (R)-pantothenate + ATP = (R)-4'-phosphopantothenate + ADP + H(+). It functions in the pathway cofactor biosynthesis; coenzyme A biosynthesis; CoA from (R)-pantothenate: step 1/5. Functionally, catalyzes the phosphorylation of pantothenate (Pan), the first step in CoA biosynthesis. The protein is Type III pantothenate kinase of Ehrlichia canis (strain Jake).